A 95-amino-acid polypeptide reads, in one-letter code: MNEERLFKILLAPHISEKGALTTGQYVFEVMPDATKPEIKRAVEKQFNVTVKSVRTCNVKGKTTRFRQVRGRRKNWKKAYVMLAPGSEIDIAAGE.

It belongs to the universal ribosomal protein uL23 family. In terms of assembly, part of the 50S ribosomal subunit. Contacts protein L29, and trigger factor when it is bound to the ribosome.

Functionally, one of the early assembly proteins it binds 23S rRNA. One of the proteins that surrounds the polypeptide exit tunnel on the outside of the ribosome. Forms the main docking site for trigger factor binding to the ribosome. This Coxiella burnetii (strain CbuK_Q154) (Coxiella burnetii (strain Q154)) protein is Large ribosomal subunit protein uL23.